The sequence spans 236 residues: E3 ubiquitin-protein ligase RNF187 (236 aa).

The segment at 12-53 (CALCQRAPREPVRADCGHRFCRACVVRFWAEEDGPFPCPECA) adopts an RING-type zinc-finger fold. R98 and R109 each carry asymmetric dimethylarginine; by PRMT1. K195 is covalently cross-linked (Glycyl lysine isopeptide (Lys-Gly) (interchain with G-Cter in ubiquitin)). A Phosphoserine modification is found at S200. Residues K224 and K225 each participate in a glycyl lysine isopeptide (Lys-Gly) (interchain with G-Cter in ubiquitin) cross-link.

As to quaternary structure, homodimer. Interacts with JUN, independently of JUN phosphorylation. Interacts (via C-terminus) with TRIM7. In terms of processing, ubiquitinated; undergoes 'Lys-48'-linked autoubiquitination in the absence of growth factors and MAP3K1-induced 'Lys-63'-linked polyubiquitination. 'Lys-48'-autoubiquitination leads to degradation by the proteasome, while MAP3K1-induced 'Lys-63'-linked polyubiquitination results in the stabilization of the protein. 'Lys-48'- and 'Lys-63'-linked polyubiquitinations occur most probably on the same 3 C-terminal lysine residues (Lys-195, Lys-224 and Lys-225) and are thus mutually exclusive. Other sites of ubiquitination are not excluded. 'Lys-63'-linked polyubiquitination by TRIM7 in response to growth factor signaling via the MEK/ERK pathway enhances protein stability. Post-translationally, arginine methylation by PRMT1 stabilizes RNF187 by facilitating K63-linked ubiquitin chain formation, and enables dimerization, c-Jun interaction and subsequent AP1 target gene expression.

The protein resides in the cytoplasm. Its subcellular location is the nucleus. It catalyses the reaction S-ubiquitinyl-[E2 ubiquitin-conjugating enzyme]-L-cysteine + [acceptor protein]-L-lysine = [E2 ubiquitin-conjugating enzyme]-L-cysteine + N(6)-ubiquitinyl-[acceptor protein]-L-lysine.. The protein operates within protein modification; protein ubiquitination. In terms of biological role, E3 ubiquitin-protein ligase that acts as a coactivator of JUN-mediated gene activation in response to growth factor signaling via the MAP3K1 pathway, independently from MAPK8. This Mus musculus (Mouse) protein is E3 ubiquitin-protein ligase RNF187 (Rnf187).